The following is an 844-amino-acid chain: Bifunctional abietadiene synthase, chloroplastic (844 aa).

Residues 1–46 constitute a chloroplast transit peptide; sequence QSIPHFSTTLNAGSSARKRRSLYLRWGKGSNKIIACVGEGATSVPY. Lysine 245 lines the substrate pocket. Aspartate 378 and aspartate 380 together coordinate Mg(2+). A DXDD motif motif is present at residues 378–381; it reads DIDD. Lysine 465 is a binding site for substrate. Residues aspartate 597, aspartate 601, asparagine 741, threonine 745, and glutamate 749 each contribute to the Mg(2+) site. Positions 597–601 match the DDXXD motif motif; it reads DDLYD.

The protein belongs to the terpene synthase family. Tpsd subfamily. Monomer. The cofactor is Mg(2+).

It localises to the plastid. It is found in the chloroplast. The catalysed reaction is (2E,6E,10E)-geranylgeranyl diphosphate = (+)-copalyl diphosphate. It carries out the reaction (+)-copalyl diphosphate = abieta-7,13-diene + diphosphate. The enzyme catalyses (+)-copalyl diphosphate = neoabietadiene + diphosphate. It catalyses the reaction (+)-copalyl diphosphate = abieta-8(14),12-diene + diphosphate. It participates in terpene metabolism; oleoresin biosynthesis. Its function is as follows. Involved in defensive oleoresin formation in conifers in response to insect attack or other injury. Involved in diterpene (C20) olefins biosynthesis. Bifunctional enzyme that catalyzes two sequential cyclizations of geranylgeranyl diphosphate (GGPP) to abietadiene. The copalyl diphosphate (CPP) intermediate diffuses freely between the 2 active sites in the enzyme. The protein is Bifunctional abietadiene synthase, chloroplastic (LAS) of Abies balsamea (Balsam fir).